A 174-amino-acid polypeptide reads, in one-letter code: Large ribosomal subunit protein uL10 (174 aa).

Belongs to the universal ribosomal protein uL10 family. Part of the ribosomal stalk of the 50S ribosomal subunit. The N-terminus interacts with L11 and the large rRNA to form the base of the stalk. The C-terminus forms an elongated spine to which L12 dimers bind in a sequential fashion forming a multimeric L10(L12)X complex.

Forms part of the ribosomal stalk, playing a central role in the interaction of the ribosome with GTP-bound translation factors. This Pelobacter propionicus (strain DSM 2379 / NBRC 103807 / OttBd1) protein is Large ribosomal subunit protein uL10.